The primary structure comprises 505 residues: Lysine--tRNA ligase (505 aa).

Polar residues predominate over residues 1-11 (MSDQQLDQPSL). The disordered stretch occupies residues 1–23 (MSDQQLDQPSLSHEERQHEENKL). Residues 12–23 (SHEERQHEENKL) show a composition bias toward basic and acidic residues. Residues glutamate 415 and glutamate 422 each coordinate Mg(2+).

The protein belongs to the class-II aminoacyl-tRNA synthetase family. Homodimer. The cofactor is Mg(2+).

The protein localises to the cytoplasm. It catalyses the reaction tRNA(Lys) + L-lysine + ATP = L-lysyl-tRNA(Lys) + AMP + diphosphate. The polypeptide is Lysine--tRNA ligase (Ectopseudomonas mendocina (strain ymp) (Pseudomonas mendocina)).